The sequence spans 206 residues: Protein GrpE (206 aa).

Residues M1–N14 are compositionally biased toward basic and acidic residues. The interval M1–D56 is disordered. The span at T24–T39 shows a compositional bias: acidic residues.

It belongs to the GrpE family. Homodimer.

It is found in the cytoplasm. Participates actively in the response to hyperosmotic and heat shock by preventing the aggregation of stress-denatured proteins, in association with DnaK and GrpE. It is the nucleotide exchange factor for DnaK and may function as a thermosensor. Unfolded proteins bind initially to DnaJ; upon interaction with the DnaJ-bound protein, DnaK hydrolyzes its bound ATP, resulting in the formation of a stable complex. GrpE releases ADP from DnaK; ATP binding to DnaK triggers the release of the substrate protein, thus completing the reaction cycle. Several rounds of ATP-dependent interactions between DnaJ, DnaK and GrpE are required for fully efficient folding. This Clostridioides difficile (strain 630) (Peptoclostridium difficile) protein is Protein GrpE.